The sequence spans 331 residues: UPF0324 membrane protein SAR0338 (331 aa).

The next 11 helical transmembrane spans lie at 9 to 26 (FMIG…SFLA), 31 to 48 (ILDK…AILY), 69 to 88 (LLRF…DIIG), 93 to 115 (LLAI…NKLL), 122 to 144 (ALLL…APIF), 154 to 176 (SIGI…YAIF), 183 to 202 (YGAW…LAGG), 217 to 234 (LGRV…ILIM), 247 to 269 (ISIP…VTIP), 273 to 295 (LNIL…GLNV), and 308 to 330 (LMTI…HWLY).

It belongs to the UPF0324 family.

The protein resides in the cell membrane. This is UPF0324 membrane protein SAR0338 from Staphylococcus aureus (strain MRSA252).